Reading from the N-terminus, the 244-residue chain is Chalcone--flavanone isomerase (244 aa).

Substrate is bound by residues threonine 57, asparagine 122, and serine 199.

The protein belongs to the chalcone isomerase family.

The enzyme catalyses a chalcone = a flavanone.. It functions in the pathway secondary metabolite biosynthesis; flavonoid biosynthesis. Its function is as follows. Catalyzes the intramolecular cyclization of bicyclic chalcones into tricyclic (S)-flavanones. Responsible for the isomerization of 4,2',4',6'-tetrahydroxychalcone (also termed chalcone) into naringenin. This chain is Chalcone--flavanone isomerase (CHI), found in Arabidopsis lyrata subsp. petraea (Northern rock-cress).